The sequence spans 483 residues: Glutamyl-tRNA(Gln) amidotransferase subunit A (483 aa).

Catalysis depends on charge relay system residues K77 and S152. S176 (acyl-ester intermediate) is an active-site residue.

It belongs to the amidase family. GatA subfamily. In terms of assembly, heterotrimer of A, B and C subunits.

The enzyme catalyses L-glutamyl-tRNA(Gln) + L-glutamine + ATP + H2O = L-glutaminyl-tRNA(Gln) + L-glutamate + ADP + phosphate + H(+). Functionally, allows the formation of correctly charged Gln-tRNA(Gln) through the transamidation of misacylated Glu-tRNA(Gln) in organisms which lack glutaminyl-tRNA synthetase. The reaction takes place in the presence of glutamine and ATP through an activated gamma-phospho-Glu-tRNA(Gln). This is Glutamyl-tRNA(Gln) amidotransferase subunit A from Listeria monocytogenes serovar 1/2a (strain ATCC BAA-679 / EGD-e).